A 129-amino-acid chain; its full sequence is MTDTDTTTTIYTHEEVAQHTTHDDLWVILNGKVYNISNYIDEHPGGEEVILDCAGTDATEAFDDIGHSDEAHEILEKLYIGNLKGAKIVEAKHAQSFSTEEDSGINFPLIAVGVFLAAFGVYYYKTNFA.

The Cytochrome b5 heme-binding domain maps to 8-84 (TTIYTHEEVA…LEKLYIGNLK (77 aa)). 2 residues coordinate heme: H43 and H67. The chain crosses the membrane as a helical span at residues 104–124 (GINFPLIAVGVFLAAFGVYYY).

Belongs to the cytochrome b5 family.

The protein resides in the endoplasmic reticulum membrane. Its subcellular location is the microsome membrane. In terms of biological role, membrane bound hemoprotein which function as an electron carrier for several membrane bound oxygenases. The protein is Cytochrome b5 (Cytb5) of Candida tropicalis (Yeast).